Reading from the N-terminus, the 758-residue chain is Polyribonucleotide nucleotidyltransferase (758 aa).

Residues Asp-482 and Asp-488 each coordinate Mg(2+). A KH domain is found at 549 to 608 (PRVLSFYIDKDKISAAIGTKGKNIRSVCERSNAKIEIGDDGKVSVFAISSTEAEAAKNMM). Residues 618 to 686 (GSIIDAKVVK…KGGCPKLSRR (69 aa)) enclose the S1 motif domain. A disordered region spans residues 707–758 (DGLNNRDNYYNNSFNKKPEDNYHSNRPTRPRSGFSNRSRPKFGNNDSSSGFY). Low complexity predominate over residues 711-721 (NRDNYYNNSFN).

This sequence belongs to the polyribonucleotide nucleotidyltransferase family. The cofactor is Mg(2+).

Its subcellular location is the cytoplasm. The enzyme catalyses RNA(n+1) + phosphate = RNA(n) + a ribonucleoside 5'-diphosphate. Functionally, involved in mRNA degradation. Catalyzes the phosphorolysis of single-stranded polyribonucleotides processively in the 3'- to 5'-direction. In Wolbachia pipientis subsp. Culex pipiens (strain wPip), this protein is Polyribonucleotide nucleotidyltransferase.